Reading from the N-terminus, the 282-residue chain is Phosphatidylglycerol--prolipoprotein diacylglyceryl transferase (282 aa).

The next 3 helical transmembrane spans lie at 18–38 (IQVHWYGVIIASAVVIAVALA), 56–76 (ILWALPFTLIAARTYYVIFQW), and 89–109 (IWDGGIAIYGGLIGAGIVVIL). Arginine 137 is an a 1,2-diacyl-sn-glycero-3-phospho-(1'-sn-glycerol) binding site. A helical membrane pass occupies residues 237-257 (VIRVSQALSVVLFFGSIGLMI).

Belongs to the Lgt family.

It localises to the cell membrane. The catalysed reaction is L-cysteinyl-[prolipoprotein] + a 1,2-diacyl-sn-glycero-3-phospho-(1'-sn-glycerol) = an S-1,2-diacyl-sn-glyceryl-L-cysteinyl-[prolipoprotein] + sn-glycerol 1-phosphate + H(+). It participates in protein modification; lipoprotein biosynthesis (diacylglyceryl transfer). In terms of biological role, catalyzes the transfer of the diacylglyceryl group from phosphatidylglycerol to the sulfhydryl group of the N-terminal cysteine of a prolipoprotein, the first step in the formation of mature lipoproteins. In Lactiplantibacillus plantarum (strain ATCC BAA-793 / NCIMB 8826 / WCFS1) (Lactobacillus plantarum), this protein is Phosphatidylglycerol--prolipoprotein diacylglyceryl transferase.